The following is a 294-amino-acid chain: ATP synthase gamma chain (294 aa).

Belongs to the ATPase gamma chain family. F-type ATPases have 2 components, CF(1) - the catalytic core - and CF(0) - the membrane proton channel. CF(1) has five subunits: alpha(3), beta(3), gamma(1), delta(1), epsilon(1). CF(0) has three main subunits: a, b and c.

The protein localises to the cell membrane. In terms of biological role, produces ATP from ADP in the presence of a proton gradient across the membrane. The gamma chain is believed to be important in regulating ATPase activity and the flow of protons through the CF(0) complex. In Ruminiclostridium cellulolyticum (strain ATCC 35319 / DSM 5812 / JCM 6584 / H10) (Clostridium cellulolyticum), this protein is ATP synthase gamma chain.